We begin with the raw amino-acid sequence, 127 residues long: MPTYHQILKNPRRKKMHTNNVKALEGCPQKKGVCVKLRIVKPKKPNSAQRKVAKLRLSTRRMIIAYIPGQGHNLQEYSSVLVSGGRAPDLPGVRYTLIKGKYDFSWKESFERKKKLSKYGYSTKKKF.

Belongs to the universal ribosomal protein uS12 family.

The protein resides in the mitochondrion. In Acanthamoeba castellanii (Amoeba), this protein is Small ribosomal subunit protein uS12m (RPS12).